Reading from the N-terminus, the 325-residue chain is Aldo-keto reductase family 1 member A1 (325 aa).

Ala-2 is subject to N-acetylalanine. Phosphoserine is present on Ser-4. NADP(+) contacts are provided by residues 11 to 20, Thr-21, Trp-22, and Asp-45; that span reads GQKMPLIGLG. Catalysis depends on Tyr-50, which acts as the Proton donor. The residue at position 127 (Lys-127) is an N6-acetyllysine; alternate. Lys-127 is subject to N6-succinyllysine; alternate. Residue Lys-145 is modified to N6-succinyllysine. The NADP(+) site is built by Ser-162, Asn-163, Ser-211, Leu-213, Ser-215, Ser-216, Lys-263, Ser-264, Val-265, Thr-266, Arg-269, Gln-272, and Asn-273. The residue at position 211 (Ser-211) is a Phosphoserine.

This sequence belongs to the aldo/keto reductase family. As to quaternary structure, monomer.

The protein localises to the cytoplasm. It is found in the cytosol. Its subcellular location is the apical cell membrane. The enzyme catalyses a primary alcohol + NADP(+) = an aldehyde + NADPH + H(+). It carries out the reaction glycerol + NADP(+) = D-glyceraldehyde + NADPH + H(+). The catalysed reaction is glycerol + NADP(+) = L-glyceraldehyde + NADPH + H(+). It catalyses the reaction L-gulonate + NADP(+) = aldehydo-D-glucuronate + NADPH + H(+). The enzyme catalyses L-gulono-1,4-lactone + NADP(+) = D-glucurono-3,6-lactone + NADPH + H(+). It carries out the reaction allyl alcohol + NADP(+) = acrolein + NADPH + H(+). The catalysed reaction is hydroxyacetone + NADP(+) = methylglyoxal + NADPH + H(+). It catalyses the reaction 3-deoxyfructose + NADP(+) = 3-deoxyglucosone + NADPH + H(+). The enzyme catalyses (R)-mevalonate + NADP(+) = (R)-mevaldate + NADPH + H(+). It carries out the reaction pyridine 3-methanol + NADP(+) = pyridine-3-carbaldehyde + NADPH + H(+). The catalysed reaction is S-nitroso-CoA + NADPH + H(+) = sulfinamide-CoA + NADP(+). It catalyses the reaction S-nitrosoglutathione + NADPH + H(+) = S-(hydroxysulfenamide)glutathione + NADP(+). Functionally, catalyzes the NADPH-dependent reduction of a wide variety of carbonyl-containing compounds to their corresponding alcohols. Displays enzymatic activity towards endogenous metabolites such as aromatic and aliphatic aldehydes, ketones, monosaccharides and bile acids, with a preference for negatively charged substrates, such as glucuronate and succinic semialdehyde. Plays an important role in ascorbic acid biosynthesis by catalyzing the reduction of D-glucuronic acid and D-glucurono-gamma-lactone. Functions as a detoxifiying enzyme by reducing a range of toxic aldehydes. Reduces methylglyoxal and 3-deoxyglucosone, which are present at elevated levels under hyperglycemic conditions and are cytotoxic. Involved also in the detoxification of lipid-derived aldehydes like acrolein. Plays a role in the activation of procarcinogens, such as polycyclic aromatic hydrocarbon trans-dihydrodiols, and in the metabolism of various xenobiotics and drugs. Also acts as an inhibitor of protein S-nitrosylation by mediating degradation of S-nitroso-coenzyme A (S-nitroso-CoA), a cofactor required to S-nitrosylate proteins. S-nitroso-CoA reductase activity is involved in reprogramming intermediary metabolism in renal proximal tubules, notably by inhibiting protein S-nitrosylation of isoform 2 of PKM (PKM2). Also acts as a S-nitroso-glutathione reductase by catalyzing the NADPH-dependent reduction of S-nitrosoglutathione. Displays no reductase activity towards retinoids. The protein is Aldo-keto reductase family 1 member A1 (AKR1A1) of Sus scrofa (Pig).